Here is a 211-residue protein sequence, read N- to C-terminus: Large ribosomal subunit protein uL3 (211 aa).

The segment at 130–154 is disordered; sequence RGPMAHGSKFHRHQGSNGSATTPGR.

Belongs to the universal ribosomal protein uL3 family. In terms of assembly, part of the 50S ribosomal subunit. Forms a cluster with proteins L14 and L19.

Its function is as follows. One of the primary rRNA binding proteins, it binds directly near the 3'-end of the 23S rRNA, where it nucleates assembly of the 50S subunit. The chain is Large ribosomal subunit protein uL3 from Lachnospira eligens (strain ATCC 27750 / DSM 3376 / VPI C15-48 / C15-B4) (Eubacterium eligens).